A 781-amino-acid polypeptide reads, in one-letter code: Putative amine oxidase [copper-containing] (781 aa).

A signal peptide spans 1-34 (MSLPKTANGMDKLKLCYLLLFYLGSSSLTEVSGA). A disulfide bond links Cys-199 and Cys-203. 385–395 (FFDSSYMIGMN) lines the substrate pocket. Residue Asp-387 is the Proton acceptor of the active site. Cys-405 and Cys-432 are disulfide-bonded. A substrate-binding site is contributed by 472 to 477 (IANYDY). The active-site Schiff-base intermediate with substrate; via topaquinone is Tyr-475. Tyr-475 bears the 2',4',5'-topaquinone mark. Cu cation-binding residues include His-525 and His-527. 8 residues coordinate Ca(2+): Asp-534, Asp-536, Glu-579, Phe-671, Asp-674, Glu-676, Asp-682, and Leu-683. Asp-534 and Asp-536 together coordinate Mn(2+). Asp-682 contributes to the Mn(2+) binding site. His-693 contacts Cu cation.

The protein belongs to the copper/topaquinone oxidase family. Homodimer. It depends on Cu cation as a cofactor. The cofactor is Ca(2+). Requires L-topaquinone as cofactor. Mn(2+) is required as a cofactor. In terms of processing, topaquinone (TPQ) is generated by copper-dependent autoxidation of a specific tyrosyl residue. Prismatic layer of shell (at protein level). Expressed primarily in the mantle with highest level in the mantle edge and lower level in the mantle pallium.

Its subcellular location is the secreted. This Margaritifera margaritifera (Freshwater pearl mussel) protein is Putative amine oxidase [copper-containing].